Here is a 217-residue protein sequence, read N- to C-terminus: Somatotropin (217 aa).

A signal peptide spans 1 to 27 (MATGSHTATLLLAVALLGLPWPQEAGA). Residue His-46 participates in Zn(2+) binding. Cysteines 79 and 190 form a disulfide. Residue Ser-132 is modified to Phosphoserine. Glu-199 contributes to the Zn(2+) binding site. Cys-207 and Cys-215 are disulfide-bonded.

Belongs to the somatotropin/prolactin family.

The protein localises to the secreted. Its function is as follows. Plays an important role in growth control. Its major role in stimulating body growth is to stimulate the liver and other tissues to secrete IGF1. It stimulates both the differentiation and proliferation of myoblasts. It also stimulates amino acid uptake and protein synthesis in muscle and other tissues. The protein is Somatotropin (GH1) of Xanthonycticebus pygmaeus (Pygmy slow loris).